Consider the following 214-residue polypeptide: Probable nicotinate-nucleotide adenylyltransferase (214 aa).

This sequence belongs to the NadD family.

The catalysed reaction is nicotinate beta-D-ribonucleotide + ATP + H(+) = deamido-NAD(+) + diphosphate. It participates in cofactor biosynthesis; NAD(+) biosynthesis; deamido-NAD(+) from nicotinate D-ribonucleotide: step 1/1. Functionally, catalyzes the reversible adenylation of nicotinate mononucleotide (NaMN) to nicotinic acid adenine dinucleotide (NaAD). This chain is Probable nicotinate-nucleotide adenylyltransferase, found in Buchnera aphidicola subsp. Acyrthosiphon pisum (strain 5A).